We begin with the raw amino-acid sequence, 446 residues long: MTALTSAAIVGGGLAGCECARKLARAGIAVTLFEMKPHSFSPAHSSPELGELVCSNSLRSDEPEAGVGVLKQEMRALGSLVMEVAEATRVPAGKALAVDRGLFAASMTAAMEAEPGITLIRREITSLDDPALQGFDAVVIAAGPVASESLSRSLADAVGATHLYFYDAIAPIISADSVNMEKAFWGSRYRPEDTDYLNCPMNREEYFAFREALVEGEKAATKDFEKELHFEGCMPIEALAERGEMTLAFGPFKPVGLDDPRTGRRPFAVVQLRTENLNKTMFNLVGCQTKLKYGEQDRIFRMIPGLEDAEFVRYGSVHRNTYVNAPQVLNGDQSLKNRPDVFLAGQITGVEGYVESAANGMWLGMMLAARKHGENIPQPPVECALGALAAHLRTPVKKFQPSNINFGLTPELNQRARKKDRKALYAERARENFTQWYALLPASARS.

11-16 (GGGLAG) serves as a coordination point for FAD.

The protein belongs to the MnmG family. TrmFO subfamily. FAD is required as a cofactor.

It is found in the cytoplasm. It catalyses the reaction uridine(54) in tRNA + (6R)-5,10-methylene-5,6,7,8-tetrahydrofolate + NADH + H(+) = 5-methyluridine(54) in tRNA + (6S)-5,6,7,8-tetrahydrofolate + NAD(+). The enzyme catalyses uridine(54) in tRNA + (6R)-5,10-methylene-5,6,7,8-tetrahydrofolate + NADPH + H(+) = 5-methyluridine(54) in tRNA + (6S)-5,6,7,8-tetrahydrofolate + NADP(+). Functionally, catalyzes the folate-dependent formation of 5-methyl-uridine at position 54 (M-5-U54) in all tRNAs. The protein is Methylenetetrahydrofolate--tRNA-(uracil-5-)-methyltransferase TrmFO of Oleidesulfovibrio alaskensis (strain ATCC BAA-1058 / DSM 17464 / G20) (Desulfovibrio alaskensis).